The primary structure comprises 265 residues: Metallo-beta-lactamase VIM-7 (265 aa).

A signal peptide spans 1-17; it reads MFQIRSFLVGISAFVMA. Zn(2+) is bound by residues His113, His115, Asp117, His178, Cys197, and His239.

It belongs to the metallo-beta-lactamase superfamily. Class-B beta-lactamase family. As to quaternary structure, monomer. Zn(2+) serves as cofactor.

Its subcellular location is the periplasm. The enzyme catalyses a beta-lactam + H2O = a substituted beta-amino acid. Its function is as follows. Class B beta-lactamase which confers resistance to the beta-lactam antibiotics, including penicillins, cephalosporins and carbapenems. Acts via hydrolysis of the beta-lactam ring. Has penicillin-, cephalosporin- and carbapenem-hydrolyzing activities. The sequence is that of Metallo-beta-lactamase VIM-7 from Pseudomonas aeruginosa.